The primary structure comprises 676 residues: F420-dependent formate dehydrogenase 2 subunit alpha (676 aa).

The 4Fe-4S Mo/W bis-MGD-type domain maps to 4-60 (FKVVHTICPYCGTGCGIDLVVKDGKVVDSHPFKRHPVNEGKVCIKGNYCYEFVHSED). [4Fe-4S] cluster is bound by residues Cys-11, Cys-14, Cys-18, and Cys-46. Residue Sec-133 is a non-standard amino acid, selenocysteine.

This sequence belongs to the prokaryotic molybdopterin-containing oxidoreductase family. As to quaternary structure, dimer of an alpha (FdhA2) and a beta (FdhB2) subunit. [4Fe-4S] cluster is required as a cofactor. The cofactor is Mo-bis(molybdopterin guanine dinucleotide). It depends on Zn(2+) as a cofactor.

It carries out the reaction oxidized coenzyme F420-(gamma-L-Glu)(n) + formate + 2 H(+) = reduced coenzyme F420-(gamma-L-Glu)(n) + CO2. In terms of biological role, catalyzes the oxidation of formate to carbon dioxide, with coenzyme F420 as the electron acceptor. In vitro can also use methyl viologen as electron acceptor. This chain is F420-dependent formate dehydrogenase 2 subunit alpha, found in Methanococcus maripaludis (strain DSM 14266 / JCM 13030 / NBRC 101832 / S2 / LL).